We begin with the raw amino-acid sequence, 51 residues long: MARNKPLGKKLRLAAALRSNRNPPVWVVAKTKRRVVRSPARRHWRRVKLKA.

It belongs to the eukaryotic ribosomal protein eL39 family.

The protein is Large ribosomal subunit protein eL39 of Pyrobaculum neutrophilum (strain DSM 2338 / JCM 9278 / NBRC 100436 / V24Sta) (Thermoproteus neutrophilus).